Reading from the N-terminus, the 231-residue chain is MDARQMKIKAAQAALGYVESGMRLGIGTGSTAEEFVRLLAEKVASGFQIQGVPTSERTARLCLELGVPLKSLDELPELDLTIDGADEVDGKLRLIKGGGGALLREKIVASASERMIVIADESKVVDVLGAFKLPIEVNQFGLTTTRLAIEKVAARLGLTGDIGLRASGDGPFMTDGGHLILDASFGRIPDAEALAAGLNAIPGVVEHGLFLGMASLAIIAGPEGARTLTAG.

Substrate is bound by residues 28 to 31 (TGST), 83 to 86 (DGAD), and 96 to 99 (KGGG). Catalysis depends on Glu-105, which acts as the Proton acceptor. Lys-123 serves as a coordination point for substrate.

The protein belongs to the ribose 5-phosphate isomerase family. As to quaternary structure, homodimer.

It carries out the reaction aldehydo-D-ribose 5-phosphate = D-ribulose 5-phosphate. The protein operates within carbohydrate degradation; pentose phosphate pathway; D-ribose 5-phosphate from D-ribulose 5-phosphate (non-oxidative stage): step 1/1. Its function is as follows. Catalyzes the reversible conversion of ribose-5-phosphate to ribulose 5-phosphate. The chain is Ribose-5-phosphate isomerase A from Sinorhizobium fredii (strain NBRC 101917 / NGR234).